Consider the following 376-residue polypeptide: MVHAPAKEAIPLLTPYKMGQLELSHRVVLAPLTRCRSYGHVPQPHAAVYYSQRATNGGLLIAEATVISPTAQGYPDTPGIYTQQQIEAWKPIVDAVHRKGALFFLQIWHVGRVSTTDFQPNGQAPISSTDKQITPDDSGMVYSKPRRLRTDEIPQIVDDFRRAARNAIESGFDGVEIHGAHGYLLDQFMKDSANDRTDEYGGNLENRCRFAVEVIDAVVAEVGAHRVGIRLSPFDNYMDCFDSNPVALGSYMVQQLNKHPGFLYCHMVEPGMAIVEGRRKITHGLLPFRKQFNGTFIAAGGYDREEGNKVVADGYADLVAYGRLFLANPDLPRRFELDAPLNRYDRSTFYTQDPVVGYTDYPFLEEIDEESTTTYA.

FMN contacts are provided by residues 31 to 33 (PLT), Ala64, and Gln106. Position 178–181 (178–181 (HGAH)) interacts with substrate. Tyr183 (proton donor) is an active-site residue. FMN is bound by residues Arg230, Gly301, and 322–323 (GR).

The protein belongs to the NADH:flavin oxidoreductase/NADH oxidase family. FMN serves as cofactor.

Functionally, putative oxophytodienoate reductase that may be involved in the biosynthesis or metabolism of oxylipin signaling molecules. The sequence is that of Putative 12-oxophytodienoate reductase 2 (OPR2) from Oryza sativa subsp. japonica (Rice).